We begin with the raw amino-acid sequence, 278 residues long: Bis(5'-nucleosyl)-tetraphosphatase, symmetrical (278 aa).

This sequence belongs to the Ap4A hydrolase family.

The enzyme catalyses P(1),P(4)-bis(5'-adenosyl) tetraphosphate + H2O = 2 ADP + 2 H(+). Functionally, hydrolyzes diadenosine 5',5'''-P1,P4-tetraphosphate to yield ADP. In Methylococcus capsulatus (strain ATCC 33009 / NCIMB 11132 / Bath), this protein is Bis(5'-nucleosyl)-tetraphosphatase, symmetrical.